We begin with the raw amino-acid sequence, 182 residues long: CDP-diacylglycerol--glycerol-3-phosphate 3-phosphatidyltransferase (182 aa).

At 1–12 (MQLNIPTWLTLF) the chain is on the cytoplasmic side. Residues 13–37 (RVVMIPFFVLAFYLPFKWAPLCCAL) traverse the membrane as a helical segment. Over 38 to 60 (IFVLAAVTDWFDGFLARRWKQTT) the chain is Periplasmic. Residues 61–81 (RFGAFLDPVADKVMVAMALVL) traverse the membrane as a helical segment. The Cytoplasmic segment spans residues 82–86 (VAEHF). A helical membrane pass occupies residues 87–107 (HSWWITLPAATMIAREIIISA). Residues 108–145 (LREWMAEIGKRSSVAVSWIGKVKTTAQMLALVTLLWRP) lie on the Periplasmic side of the membrane. The helical transmembrane segment at 146-168 (DDIVSGIGIAALYVAAVLTFWSM) threads the bilayer. Topologically, residues 169–181 (FQYLYAARHDLFE) are cytoplasmic.

It belongs to the CDP-alcohol phosphatidyltransferase class-I family.

Its subcellular location is the cell inner membrane. It carries out the reaction a CDP-1,2-diacyl-sn-glycerol + sn-glycerol 3-phosphate = a 1,2-diacyl-sn-glycero-3-phospho-(1'-sn-glycero-3'-phosphate) + CMP + H(+). Its pathway is phospholipid metabolism; phosphatidylglycerol biosynthesis; phosphatidylglycerol from CDP-diacylglycerol: step 1/2. Its function is as follows. Catalyzes the conversion of cytidine diphosphate diacylglycerol (CDP-DG) and glycerol 3-phosphate into phosphatidylglycerol. Essential for the synthesis of anionic phospholipids, thereby playing a role in balancing the ratio of zwitterionic and anionic phospholipids, which is thought to be important for normal membrane function. The chain is CDP-diacylglycerol--glycerol-3-phosphate 3-phosphatidyltransferase from Sodalis glossinidius (strain morsitans).